The following is an 800-amino-acid chain: MAATRTASRACEIFTTLEYGPAPESHACALAWLDTQDRHLGHYVNGQWLKPEHRSSVPCQDPITGENLASCLQAQSEDVAAAVEAARASLENWSTQPGAIRAQHLTRLAKVIQKHQRLLWTLESLVTGRAVREVRDRDVPLAQQLLQYHAVQAHTQEEALAGWEPMGVIGLILSPTFPFLDMMWRICPALAVGCTVVVLVPPASPTPLLLAQLAGELGPFPGILNVISGPASLGPVLAAQPGVQKVAFCGAIEEGRALRRTLAGWVPELGLALGAESLLLLTEVADVDSAVEGIVDAAWSDRSPGGLRLLIQEAVWDETMRRLQERMGRLRCGHGLDGAVDMGARGAAARDLAQRYVSEAQSQGAQVFQAGSEPSDSPFFPPTLVSDLPPASPCTQAEVPWPLVVASPFRTAKEALAVANGTPRGGSASVWSERLGQALELAYGLQVGTVWINAHGLRDPAVPTGGCKESGSSWHGGQDGLYEYLRPSGTPAWIPYLSKTLNYDAFGLALPSTLPAGPETGPAPPYGLFVGGRFQAPGARSSRPIQDSQGSLQGYVAEGGAKDIRGAVEAAHQAAPGWMSQSPAARAALLWALAAALQRREPNLVSRLERHGVELKVAKAEVELSVKRLRAWGARVQAQGCALQVAELRGPVLRLREPLGVLAIVCPDEWPLLAFVSLLAPALAHGNTVVLVPSGACPIPALEVCQEMATLLPAGLVNVVTGDRDHLTRCLALHQDIQALWYFGSAQGSQFVEWASAGNLKPVWVNRGCPRAWDQEAEGAGPELGRRAARTKALWLPMGD.

This sequence belongs to the aldehyde dehydrogenase family. Interacts with SPG21.

The polypeptide is Aldehyde dehydrogenase family 16 member A1 (ALDH16A1) (Bos taurus (Bovine)).